Consider the following 139-residue polypeptide: D-ribose pyranase (139 aa).

His-20 acts as the Proton donor in catalysis. Substrate is bound by residues Asp-28, His-106, and 128–130 (YAN).

Belongs to the RbsD / FucU family. RbsD subfamily. Homodecamer.

It localises to the cytoplasm. It catalyses the reaction beta-D-ribopyranose = beta-D-ribofuranose. The protein operates within carbohydrate metabolism; D-ribose degradation; D-ribose 5-phosphate from beta-D-ribopyranose: step 1/2. Catalyzes the interconversion of beta-pyran and beta-furan forms of D-ribose. This Aliivibrio fischeri (strain MJ11) (Vibrio fischeri) protein is D-ribose pyranase.